The primary structure comprises 156 residues: ATP synthase subunit b (156 aa).

The helical transmembrane segment at 3–23 threads the bilayer; the sequence is ITLTIFAQALAFAGLIWIVAT.

The protein belongs to the ATPase B chain family. As to quaternary structure, F-type ATPases have 2 components, F(1) - the catalytic core - and F(0) - the membrane proton channel. F(1) has five subunits: alpha(3), beta(3), gamma(1), delta(1), epsilon(1). F(0) has three main subunits: a(1), b(2) and c(10-14). The alpha and beta chains form an alternating ring which encloses part of the gamma chain. F(1) is attached to F(0) by a central stalk formed by the gamma and epsilon chains, while a peripheral stalk is formed by the delta and b chains.

It is found in the cell inner membrane. In terms of biological role, f(1)F(0) ATP synthase produces ATP from ADP in the presence of a proton or sodium gradient. F-type ATPases consist of two structural domains, F(1) containing the extramembraneous catalytic core and F(0) containing the membrane proton channel, linked together by a central stalk and a peripheral stalk. During catalysis, ATP synthesis in the catalytic domain of F(1) is coupled via a rotary mechanism of the central stalk subunits to proton translocation. Its function is as follows. Component of the F(0) channel, it forms part of the peripheral stalk, linking F(1) to F(0). The chain is ATP synthase subunit b from Xanthomonas oryzae pv. oryzae (strain MAFF 311018).